The primary structure comprises 180 residues: Cell division protein SepF (180 aa).

Residues Met1 to Gly66 are disordered. A compositionally biased stretch (acidic residues) spans Ala12–Gly23. A compositionally biased stretch (low complexity) spans Tyr24–Asn57.

The protein belongs to the SepF family. As to quaternary structure, homodimer. Interacts with FtsZ.

It localises to the cytoplasm. Its function is as follows. Cell division protein that is part of the divisome complex and is recruited early to the Z-ring. Probably stimulates Z-ring formation, perhaps through the cross-linking of FtsZ protofilaments. Its function overlaps with FtsA. This is Cell division protein SepF from Oenococcus oeni (strain ATCC BAA-331 / PSU-1).